A 271-amino-acid polypeptide reads, in one-letter code: Phosphate import ATP-binding protein PstB (271 aa).

In terms of domain architecture, ABC transporter spans 25–266 (VDVRQLSLWY…PKHPYTEAYI (242 aa)). 57–64 (GPSGCGKS) is a binding site for ATP.

The protein belongs to the ABC transporter superfamily. Phosphate importer (TC 3.A.1.7) family. As to quaternary structure, the complex is composed of two ATP-binding proteins (PstB), two transmembrane proteins (PstC and PstA) and a solute-binding protein (PstS).

It is found in the cell inner membrane. The catalysed reaction is phosphate(out) + ATP + H2O = ADP + 2 phosphate(in) + H(+). Its function is as follows. Part of the ABC transporter complex PstSACB involved in phosphate import. Responsible for energy coupling to the transport system. The chain is Phosphate import ATP-binding protein PstB from Thermus thermophilus (strain ATCC BAA-163 / DSM 7039 / HB27).